Reading from the N-terminus, the 193-residue chain is GTP cyclohydrolase 1 (193 aa).

Residues cysteine 83, histidine 86, and cysteine 154 each coordinate Zn(2+).

The protein belongs to the GTP cyclohydrolase I family. Homomer.

The enzyme catalyses GTP + H2O = 7,8-dihydroneopterin 3'-triphosphate + formate + H(+). It participates in cofactor biosynthesis; 7,8-dihydroneopterin triphosphate biosynthesis; 7,8-dihydroneopterin triphosphate from GTP: step 1/1. The protein is GTP cyclohydrolase 1 of Porphyromonas gingivalis (strain ATCC 33277 / DSM 20709 / CIP 103683 / JCM 12257 / NCTC 11834 / 2561).